Consider the following 102-residue polypeptide: Small ribosomal subunit protein bS6 (102 aa).

This sequence belongs to the bacterial ribosomal protein bS6 family.

Binds together with bS18 to 16S ribosomal RNA. The protein is Small ribosomal subunit protein bS6 of Desulfovibrio desulfuricans (strain ATCC 27774 / DSM 6949 / MB).